Reading from the N-terminus, the 369-residue chain is Tetraacyldisaccharide 4'-kinase (369 aa).

52–59 (TVGGTGKT) lines the ATP pocket.

This sequence belongs to the LpxK family.

The enzyme catalyses a lipid A disaccharide + ATP = a lipid IVA + ADP + H(+). It functions in the pathway glycolipid biosynthesis; lipid IV(A) biosynthesis; lipid IV(A) from (3R)-3-hydroxytetradecanoyl-[acyl-carrier-protein] and UDP-N-acetyl-alpha-D-glucosamine: step 6/6. In terms of biological role, transfers the gamma-phosphate of ATP to the 4'-position of a tetraacyldisaccharide 1-phosphate intermediate (termed DS-1-P) to form tetraacyldisaccharide 1,4'-bis-phosphate (lipid IVA). The sequence is that of Tetraacyldisaccharide 4'-kinase from Parabacteroides distasonis (strain ATCC 8503 / DSM 20701 / CIP 104284 / JCM 5825 / NCTC 11152).